We begin with the raw amino-acid sequence, 317 residues long: o-succinylbenzoate synthase (317 aa).

2-succinylbenzoate is bound by residues Asn-71–Thr-73 and Lys-95. The active-site Proton donor is Lys-97. 3 residues coordinate Mg(2+): Asp-128, Glu-154, and Asp-177. Asp-128–Asn-130 lines the 2-succinylbenzoate pocket. Position 201 (Lys-201) interacts with 2-succinylbenzoate. Lys-201 functions as the Proton acceptor in the catalytic mechanism.

This sequence belongs to the mandelate racemase/muconate lactonizing enzyme family. MenC type 1 subfamily. As to quaternary structure, monomer. It depends on a divalent metal cation as a cofactor.

It carries out the reaction (1R,6R)-6-hydroxy-2-succinyl-cyclohexa-2,4-diene-1-carboxylate = 2-succinylbenzoate + H2O. The protein operates within quinol/quinone metabolism; 1,4-dihydroxy-2-naphthoate biosynthesis; 1,4-dihydroxy-2-naphthoate from chorismate: step 4/7. Its pathway is quinol/quinone metabolism; menaquinone biosynthesis. In terms of biological role, converts 2-succinyl-6-hydroxy-2,4-cyclohexadiene-1-carboxylate (SHCHC) to 2-succinylbenzoate (OSB). Does not show N-succinylamino acid racemase (NSAR) activity with N-succinyl-L-phenylglycine as substrate. The protein is o-succinylbenzoate synthase of Thermobifida fusca (strain YX).